Consider the following 545-residue polypeptide: Betaine receptor acr-23 (545 aa).

A signal peptide spans 1–19 (MHRIYTFLIFISQLALGLS). Over 20-244 (NNPDIPIQYE…DVVIQRKPLY (225 aa)) the chain is Extracellular. N53 and N97 each carry an N-linked (GlcNAc...) asparagine glycan. 2 disulfide bridges follow: C157–C171 and C224–C225. A glycan (N-linked (GlcNAc...) asparagine) is linked at N228. The helical transmembrane segment at 245–265 (YVLNLIAPTAVITFISIIGFF) threads the bilayer. A glycan (N-linked (GlcNAc...) asparagine) is linked at N276. The next 2 membrane-spanning stretches (helical) occupy residues 287-307 (EKIT…FMVS) and 317-337 (VPLI…GTLA). Residues 338–512 (ASSVIFVQKL…WDWVAAVLER (175 aa)) are Cytoplasmic-facing. The chain crosses the membrane as a helical span at residues 513–533 (VFLIFFTICFLFSAIGINLYG).

Belongs to the ligand-gated ion channel (TC 1.A.9) family. Acetylcholine receptor (TC 1.A.9.1) subfamily. As to expression, expressed in the body wall muscles that are arranged into four longitudinal bundles, some mechanosensory neurons, the head muscles and multiple interneurons. Not expressed in motor neurons (at protein level).

Its subcellular location is the cell membrane. Its function is as follows. Betaine receptor that functions as a ligand-gated non-selective monovalent cation channel in mechanosensory neurons to maintain basal levels of locomotion. The channel is permeable to Na(+) and K(+) but not to Ba(2+) or Ca(2+) ions. Elicits current in response to betaine, very weak current in response to choline, virtually no current in response to acetylcholine and nicotine, and no current in response to glycine and GABA. The protein is Betaine receptor acr-23 of Caenorhabditis elegans.